Reading from the N-terminus, the 162-residue chain is MKLNELRDNPGATKNRIRVGRGIGSGKGKTAGRGVKGQKSREGVSINGFEGGQMPIYRRLPKRGFNNPTRKSFAVVNLDRIQKAIDAKKLDATAVITEKALIEAGLVRRSQDGVRLLGKGELSVKVAIEVAGASATAREGVEKAGGTLTVTGAAAEAAPAAV.

The tract at residues 1–44 (MKLNELRDNPGATKNRIRVGRGIGSGKGKTAGRGVKGQKSREGV) is disordered. Residues 21-35 (RGIGSGKGKTAGRGV) show a composition bias toward gly residues.

Belongs to the universal ribosomal protein uL15 family. As to quaternary structure, part of the 50S ribosomal subunit.

Functionally, binds to the 23S rRNA. This is Large ribosomal subunit protein uL15 from Rhodospirillum rubrum (strain ATCC 11170 / ATH 1.1.1 / DSM 467 / LMG 4362 / NCIMB 8255 / S1).